Here is a 68-residue protein sequence, read N- to C-terminus: Protein VNG_1110C (68 aa).

The polypeptide is Protein VNG_1110C (Halobacterium salinarum (strain ATCC 700922 / JCM 11081 / NRC-1) (Halobacterium halobium)).